Reading from the N-terminus, the 178-residue chain is METQEVMREIQYEEFEEKIIEIRRTSKVTKGGKNLSFRVVAIVGNKNGKVGLGIGKAREVPEAIRKAIADAKKNVIEVPVINGTIPHEVIGRQDASRVLLKPAAPGTGIIAGGTVRAVVELAGIQNILTKALGSTNPLNLAMATINGLKELLDPRKVAKLRDITVEEVYRGVRREGNA.

The S5 DRBM domain occupies 15 to 78 (FEEKIIEIRR…ADAKKNVIEV (64 aa)).

Belongs to the universal ribosomal protein uS5 family. In terms of assembly, part of the 30S ribosomal subunit. Contacts proteins S4 and S8.

Its function is as follows. With S4 and S12 plays an important role in translational accuracy. In terms of biological role, located at the back of the 30S subunit body where it stabilizes the conformation of the head with respect to the body. This is Small ribosomal subunit protein uS5 from Thermotoga neapolitana (strain ATCC 49049 / DSM 4359 / NBRC 107923 / NS-E).